A 62-amino-acid chain; its full sequence is Small ribosomal subunit protein eS30z/eS30y/eS30x (62 aa).

Residues Met1–Leu38 form a disordered region. Residues Asp25–Leu38 show a composition bias toward basic residues.

It belongs to the eukaryotic ribosomal protein eS30 family.

This Arabidopsis thaliana (Mouse-ear cress) protein is Small ribosomal subunit protein eS30z/eS30y/eS30x (RPS30A).